We begin with the raw amino-acid sequence, 129 residues long: uncharacterized protein (129 aa).

The protein localises to the cytoplasm. It localises to the cytosol. It is found in the nucleus. This is an uncharacterized protein from Schizosaccharomyces pombe (strain 972 / ATCC 24843) (Fission yeast).